Reading from the N-terminus, the 554-residue chain is MQYLPEKDYELPRLDLLTLLFESQLSLTTESTILHAEAADPTNHITKAQARTITKRLAHVFRSEFGIGADGPGKDAVMCISANQVLLPAVFCGIIGAGGVYTAASTALTASEVSKQLRQSRSKVIVACPENRAKARDAARECGIPPDRVLVLESMGHRRLLCQGNFGRNYLQATAELDWERIADIDALENTTICLLYSSGTTGPPKGVMLSHMNLVSEALFTQLVLRDSKEGKPHLNVPYRTVGHLPTAHIAGCLGCFITPAVAGGTVYWMPRFNIDEFIDYCKKYAVTFLSTAPPVYHGIVRSDRVTDQFKTLVRAESGAAPLSLELQEQAEKMLGCTISQRWGMTESTGSVTTMPWGQSDNTGGISPLLPNMRLRLVDERMRDVRSGDEGEILLKGPMITKGYFENPEATAEAFTTDGWYKTGDIGVYKDGKIIMVDRKKELIKYKGLQVSPVEIEGFLLTHPGVADVAVVGARDPEAPGNELPRAYVVIKAGSSVSEAELKEYVKSNLAGHKQLRGGVVFIDEIPKSASGKILRRILRDQARSSAGREAKL.

195-206 (LLYSSGTTGPPK) contacts AMP.

It belongs to the ATP-dependent AMP-binding enzyme family.

The polypeptide is Putative acyl-coenzyme A synthetase (Emericella nidulans (strain FGSC A4 / ATCC 38163 / CBS 112.46 / NRRL 194 / M139) (Aspergillus nidulans)).